We begin with the raw amino-acid sequence, 291 residues long: Putative fatty acid elongase 4 (291 aa).

The next 3 helical transmembrane spans lie at 46-66 (ILFQKYWYHSITISVLYFILI), 79-99 (FTLKYPLILWNGALAAFSIIA), and 254-274 (NLYLAFVIYVTFAILFIQFFV).

It belongs to the ELO family.

The protein localises to the membrane. It carries out the reaction a very-long-chain acyl-CoA + malonyl-CoA + H(+) = a very-long-chain 3-oxoacyl-CoA + CO2 + CoA. It functions in the pathway lipid metabolism; fatty acid biosynthesis. Its function is as follows. Could be implicated in synthesis of very long chain fatty acids. This is Putative fatty acid elongase 4 (elo-4) from Caenorhabditis elegans.